Reading from the N-terminus, the 273-residue chain is Dermonecrotic toxin LhSicTox-alphaIA2biii (273 aa).

The active site involves histidine 5. Mg(2+)-binding residues include glutamate 25 and aspartate 27. The Nucleophile role is filled by histidine 41. Cystine bridges form between cysteine 45–cysteine 51 and cysteine 47–cysteine 190. Aspartate 85 is a binding site for Mg(2+).

The protein belongs to the arthropod phospholipase D family. Class II subfamily. The cofactor is Mg(2+). As to expression, expressed by the venom gland.

The protein localises to the secreted. The catalysed reaction is an N-(acyl)-sphingosylphosphocholine = an N-(acyl)-sphingosyl-1,3-cyclic phosphate + choline. The enzyme catalyses an N-(acyl)-sphingosylphosphoethanolamine = an N-(acyl)-sphingosyl-1,3-cyclic phosphate + ethanolamine. It catalyses the reaction a 1-acyl-sn-glycero-3-phosphocholine = a 1-acyl-sn-glycero-2,3-cyclic phosphate + choline. It carries out the reaction a 1-acyl-sn-glycero-3-phosphoethanolamine = a 1-acyl-sn-glycero-2,3-cyclic phosphate + ethanolamine. In terms of biological role, dermonecrotic toxins cleave the phosphodiester linkage between the phosphate and headgroup of certain phospholipids (sphingolipid and lysolipid substrates), forming an alcohol (often choline) and a cyclic phosphate. This toxin acts on sphingomyelin (SM). It may also act on ceramide phosphoethanolamine (CPE), lysophosphatidylcholine (LPC) and lysophosphatidylethanolamine (LPE), but not on lysophosphatidylserine (LPS), and lysophosphatidylglycerol (LPG). It acts by transphosphatidylation, releasing exclusively cyclic phosphate products as second products. Induces dermonecrosis, hemolysis, increased vascular permeability, edema, inflammatory response, and platelet aggregation. In Loxosceles hirsuta (Recluse spider), this protein is Dermonecrotic toxin LhSicTox-alphaIA2biii.